A 136-amino-acid chain; its full sequence is Protein NrdI (136 aa).

The protein belongs to the NrdI family.

Its function is as follows. Probably involved in ribonucleotide reductase function. This is Protein NrdI from Salmonella typhi.